Here is a 315-residue protein sequence, read N- to C-terminus: NAD-dependent protein deacylase sirtuin-5, mitochondrial (315 aa).

Residues 1-39 constitute a mitochondrion transit peptide; the sequence is MSLLHFATRRLILQVLRELGLKAPPVHKTLKICIAMSRP. In terms of domain architecture, Deacetylase sirtuin-type spans 40–312; that stretch reads SSNMADFRRF…PEALSPHESE (273 aa). 61 to 80 contributes to the NAD(+) binding site; the sequence is GAGVSAESGVPTFRGPGGFW. Substrate contacts are provided by tyrosine 105 and arginine 108. 143–146 contributes to the NAD(+) binding site; that stretch reads QNID. Histidine 161 acts as the Proton acceptor in catalysis. Residues 254–256, 280–282, and cysteine 298 each bind NAD(+); these read GTS and NTV.

Belongs to the sirtuin family. Class III subfamily. Monomer. Homodimer. Interacts with CPS1.

It is found in the mitochondrion. It localises to the cytoplasm. Its subcellular location is the cytosol. The protein resides in the nucleus. The catalysed reaction is N(6)-malonyl-L-lysyl-[protein] + NAD(+) + H2O = 2''-O-malonyl-ADP-D-ribose + nicotinamide + L-lysyl-[protein]. It carries out the reaction N(6)-succinyl-L-lysyl-[protein] + NAD(+) + H2O = 2''-O-succinyl-ADP-D-ribose + nicotinamide + L-lysyl-[protein]. The enzyme catalyses N(6)-glutaryl-L-lysyl-[protein] + NAD(+) + H2O = 2''-O-glutaryl-ADP-D-ribose + nicotinamide + L-lysyl-[protein]. NAD-dependent lysine demalonylase, desuccinylase and deglutarylase that specifically removes malonyl, succinyl and glutaryl groups on target proteins. Activates CPS1 and contributes to the regulation of blood ammonia levels during prolonged fasting: acts by mediating desuccinylation and deglutarylation of CPS1, thereby increasing CPS1 activity in response to elevated NAD levels during fasting. Activates SOD1 by mediating its desuccinylation, leading to reduced reactive oxygen species. Activates SHMT2 by mediating its desuccinylation. Modulates ketogenesis through the desuccinylation and activation of HMGCS2. Has weak NAD-dependent protein deacetylase activity; however this activity may not be physiologically relevant in vivo. Can deacetylate cytochrome c (CYCS) and a number of other proteins in vitro such as UOX. The chain is NAD-dependent protein deacylase sirtuin-5, mitochondrial from Monodelphis domestica (Gray short-tailed opossum).